The following is a 119-amino-acid chain: Type II secretion system protein I (119 aa).

The propeptide at M1–G5 is leader sequence. M6 bears the N-methylmethionine mark. A helical membrane pass occupies residues M6 to M26.

Belongs to the GSP I family. As to quaternary structure, type II secretion is composed of four main components: the outer membrane complex, the inner membrane complex, the cytoplasmic secretion ATPase and the periplasm-spanning pseudopilus. Interacts with core component ExeG. In terms of processing, cleaved by prepilin peptidase. Post-translationally, methylated by prepilin peptidase at the amino group of the N-terminal methionine once the leader sequence is cleaved by prepilin peptidase.

It is found in the cell inner membrane. Component of the type II secretion system required for the energy-dependent secretion of extracellular factors such as proteases and toxins from the periplasm. Part of the pseudopilus tip complex that is critical for the recognition and binding of secretion substrates. The chain is Type II secretion system protein I (exeI) from Aeromonas hydrophila.